The chain runs to 278 residues: Protein NIF3 homolog (278 aa).

This sequence belongs to the GTP cyclohydrolase I type 2/NIF3 family.

The protein is Protein NIF3 homolog of Schizosaccharomyces pombe (strain 972 / ATCC 24843) (Fission yeast).